The following is a 358-amino-acid chain: NADH-quinone oxidoreductase subunit H (358 aa).

The next 8 helical transmembrane spans lie at 20 to 40 (ITVG…IPLI), 95 to 115 (ALFY…WAVI), 128 to 148 (IGLL…IIAG), 168 to 188 (ISYE…SGSM), 206 to 226 (VFSW…ISAV), 253 to 273 (GFAF…IAAL), 295 to 315 (TPSA…YLWI), and 334 to 354 (VLIP…ISPL).

The protein belongs to the complex I subunit 1 family. In terms of assembly, NDH-1 is composed of 14 different subunits. Subunits NuoA, H, J, K, L, M, N constitute the membrane sector of the complex.

It localises to the cell inner membrane. The catalysed reaction is a quinone + NADH + 5 H(+)(in) = a quinol + NAD(+) + 4 H(+)(out). NDH-1 shuttles electrons from NADH, via FMN and iron-sulfur (Fe-S) centers, to quinones in the respiratory chain. The immediate electron acceptor for the enzyme in this species is believed to be ubiquinone. Couples the redox reaction to proton translocation (for every two electrons transferred, four hydrogen ions are translocated across the cytoplasmic membrane), and thus conserves the redox energy in a proton gradient. This subunit may bind ubiquinone. In Neisseria gonorrhoeae (strain ATCC 700825 / FA 1090), this protein is NADH-quinone oxidoreductase subunit H.